Reading from the N-terminus, the 109-residue chain is Preprofallaxidin-8 (109 aa).

The N-terminal stretch at 1–22 (MASLKKSLFLVLFLGLLSLSIC) is a signal peptide. Residues 23–46 (EEQKRENEEDAEDENHEEESEEKR) constitute a propeptide that is removed on maturation. Residues 27–46 (RENEEDAEDENHEEESEEKR) are disordered. Over residues 30 to 42 (EEDAEDENHEEES) the composition is skewed to acidic residues. Leu62 is modified (leucine amide). A propeptide spanning residues 66 to 70 (SEEKR) is cleaved from the precursor. Met75 carries the methionine amide modification. A propeptide spanning residues 79-83 (SEEKR) is cleaved from the precursor. Met88 carries the post-translational modification Methionine amide. 2 propeptides span residues 92-96 (SEEKR) and Ala108.

It belongs to the frog skin active peptide (FSAP) family. Brevinin subfamily. In terms of tissue distribution, expressed by the skin glands.

The protein localises to the secreted. Its function is as follows. Fallaxidin-2.1 shows no antibacterial activity against Gram-positive or Gram-negative bacteria. Does not inhibit the formation of NO by neuronal nitric oxide synthase. Has no effect on splenocyte proliferation or smooth muscle contraction. Fallaxidin-3.2 shows antibacterial activity against the Gram-positive bacteria E.faecalis (MIC=100 uM) and L.lactis (MIC=500 uM). No antibacterial activity against the Gram-positive bacteria B.cereus, L.innocua, M.luteus, S.epidermidis, S.uberis and S.aureus, or the Gram-negative bacteria E.cloacae and E.coli. This Litoria fallax (Eastern dwarf tree frog) protein is Preprofallaxidin-8.